Consider the following 74-residue polypeptide: Cecropin-P2 (74 aa).

The N-terminal stretch at 1–13 (MIFIYLLVQTAES) is a signal peptide. Residues 45 to 74 (RRRFVVQQDTISPRLEVDERFLPNSVQEQI) constitute a propeptide, removed in mature form.

This sequence belongs to the cecropin family. Expressed in the body wall, intestine, uterus and ovary.

Its subcellular location is the secreted. Has antibacterial activity against several Gram-positive and Gram-negative bacteria. Is weakly active against yeasts. Acts by a nonpore mechanism. The polypeptide is Cecropin-P2 (ASCEC-2) (Ascaris suum (Pig roundworm)).